We begin with the raw amino-acid sequence, 93 residues long: Pyrimidine/purine nucleoside phosphorylase (93 aa).

Belongs to the nucleoside phosphorylase PpnP family.

The catalysed reaction is a purine D-ribonucleoside + phosphate = a purine nucleobase + alpha-D-ribose 1-phosphate. It carries out the reaction adenosine + phosphate = alpha-D-ribose 1-phosphate + adenine. It catalyses the reaction cytidine + phosphate = cytosine + alpha-D-ribose 1-phosphate. The enzyme catalyses guanosine + phosphate = alpha-D-ribose 1-phosphate + guanine. The catalysed reaction is inosine + phosphate = alpha-D-ribose 1-phosphate + hypoxanthine. It carries out the reaction thymidine + phosphate = 2-deoxy-alpha-D-ribose 1-phosphate + thymine. It catalyses the reaction uridine + phosphate = alpha-D-ribose 1-phosphate + uracil. The enzyme catalyses xanthosine + phosphate = alpha-D-ribose 1-phosphate + xanthine. Functionally, catalyzes the phosphorolysis of diverse nucleosides, yielding D-ribose 1-phosphate and the respective free bases. Can use uridine, adenosine, guanosine, cytidine, thymidine, inosine and xanthosine as substrates. Also catalyzes the reverse reactions. The protein is Pyrimidine/purine nucleoside phosphorylase of Tolumonas auensis (strain DSM 9187 / NBRC 110442 / TA 4).